A 295-amino-acid polypeptide reads, in one-letter code: Peptide transport system permease protein SapC (295 aa).

The next 6 helical transmembrane spans lie at 27 to 47 (IALFSFYLLIALIFTALFASY), 102 to 122 (LLVVFSVAIIGGALGIIAGLL), 129 to 149 (FVGHIFDAFLSLPILLIAVVI), 157 to 177 (LWNAMFATLLAILPYFIHTIY), 219 to 239 (VARAFVIAVLDISALSFISLG), and 262 to 282 (PWTVLLPGFAIIFTILLSIIF). Residues 98 to 278 (LGSALLVVFS…GFAIIFTILL (181 aa)) form the ABC transmembrane type-1 domain.

It belongs to the binding-protein-dependent transport system permease family. OppBC subfamily.

The protein resides in the cell inner membrane. Functionally, involved in a peptide intake transport system that plays a role in the resistance to antimicrobial peptides. The sequence is that of Peptide transport system permease protein SapC (sapC) from Haemophilus influenzae (strain ATCC 51907 / DSM 11121 / KW20 / Rd).